The primary structure comprises 300 residues: Acetylglutamate kinase (300 aa).

Residues 69–70, arginine 91, and asparagine 197 each bind substrate; that span reads GG.

This sequence belongs to the acetylglutamate kinase family. ArgB subfamily.

The protein resides in the cytoplasm. The catalysed reaction is N-acetyl-L-glutamate + ATP = N-acetyl-L-glutamyl 5-phosphate + ADP. It participates in amino-acid biosynthesis; L-arginine biosynthesis; N(2)-acetyl-L-ornithine from L-glutamate: step 2/4. Functionally, catalyzes the ATP-dependent phosphorylation of N-acetyl-L-glutamate. The sequence is that of Acetylglutamate kinase from Kineococcus radiotolerans (strain ATCC BAA-149 / DSM 14245 / SRS30216).